The sequence spans 593 residues: ABC transporter F family member 2 (593 aa).

The segment covering 1–10 (MAKKGGKNNK) has biased composition (basic residues). The segment at 1–25 (MAKKGGKNNKSKKEVTPPTSDVEDE) is disordered. ABC transporter domains follow at residues 53-294 (VKIE…VNQM) and 364-583 (MHFD…RDLT). Residues 85–92 (GQNGCGKS) and 399–406 (GPNGAGKS) contribute to the ATP site.

Belongs to the ABC transporter superfamily. ABCF family. EF3 subfamily.

The sequence is that of ABC transporter F family member 2 (abcF2) from Dictyostelium discoideum (Social amoeba).